The chain runs to 442 residues: Protein UNUSUAL FLORAL ORGANS (442 aa).

Residues 1 to 85 (MDSTVFINNP…RFYSLLFSNT (85 aa)) form an interaction with SKP1A region. The region spanning 44–90 (GRIWSKLPPPLLDRVIAFLPPPAFFRTRCVCKRFYSLLFSNTFLETY) is the F-box domain.

Part of a putative SCF (ASK/Cullin/F-box) ubiquitin ligase complex. Interacts with SKP1A/ASK1, SKP1B/ASK2 and ASK11.

It is found in the nucleus. It participates in protein modification; protein ubiquitination. Its function is as follows. Component of SCF(ASK-cullin-F-box) E3 ubiquitin ligase complexes, which may mediate the ubiquitination and subsequent proteasomal degradation of target proteins. Considered as a meristem identity factor required for normal growth of the young floral meristem. Acts together with LEAFY to positively regulate the B class floral homeotic genes APETALA3 and PISTILLATA. In this way, operates as a region-specific regulator for petal and stamen development. Alternatively, may play a role as a negative regulator of the C class floral homeotic genes. Interacts together with the SKP1-like protein ASK1 to form a ubiquitin E3 ligase complex and could indirectly promote the ubiquitination and degradation of specific proteins controlling the floral primordia development like repressors of B class floral homeotic genes. This is Protein UNUSUAL FLORAL ORGANS (UFO) from Arabidopsis thaliana (Mouse-ear cress).